Reading from the N-terminus, the 573-residue chain is 2-succinyl-5-enolpyruvyl-6-hydroxy-3-cyclohexene-1-carboxylate synthase (573 aa).

Belongs to the TPP enzyme family. MenD subfamily. Homodimer. Requires Mg(2+) as cofactor. It depends on Mn(2+) as a cofactor. Thiamine diphosphate serves as cofactor.

The catalysed reaction is isochorismate + 2-oxoglutarate + H(+) = 5-enolpyruvoyl-6-hydroxy-2-succinyl-cyclohex-3-ene-1-carboxylate + CO2. It functions in the pathway quinol/quinone metabolism; 1,4-dihydroxy-2-naphthoate biosynthesis; 1,4-dihydroxy-2-naphthoate from chorismate: step 2/7. The protein operates within quinol/quinone metabolism; menaquinone biosynthesis. Catalyzes the thiamine diphosphate-dependent decarboxylation of 2-oxoglutarate and the subsequent addition of the resulting succinic semialdehyde-thiamine pyrophosphate anion to isochorismate to yield 2-succinyl-5-enolpyruvyl-6-hydroxy-3-cyclohexene-1-carboxylate (SEPHCHC). The protein is 2-succinyl-5-enolpyruvyl-6-hydroxy-3-cyclohexene-1-carboxylate synthase of Shewanella baltica (strain OS185).